The primary structure comprises 450 residues: Thiamine biosynthesis regulatory protein (450 aa).

The span at 1–12 shows a compositional bias: basic residues; it reads MVNSKRQQRSKK. The interval 1–23 is disordered; sequence MVNSKRQQRSKKVASSSKVPPTK. The segment covering 13 to 23 has biased composition (low complexity); sequence VASSSKVPPTK. Positions 30–57 form a DNA-binding region, zn(2)-C6 fungal-type; the sequence is CWACRFKKRRCDENRPICSLCAKHGDNC. The disordered stretch occupies residues 210–234; that stretch reads TDQLPSPGHSMSSAEETTTAALSSP.

It localises to the nucleus. In terms of biological role, positive regulator of thiamine biosynthesis. The protein is Thiamine biosynthesis regulatory protein (THI2) of Saccharomyces cerevisiae (strain ATCC 204508 / S288c) (Baker's yeast).